A 192-amino-acid polypeptide reads, in one-letter code: WYSSMFAANIKQEPISHHHHHHHAHHSRRQHPHDSNSNSNASSPHQSPLPSPNPPSNTNLQLEQYLKHQQQQQQQQHQQQPMDTLCAAAMTPSPSNNDQNSPLTWPGLPNPMQSIMPANLRPSPNTTTTTPPAAAPAAATIALQANDKLQALTPPMDVTPPKSPAKSQQSCAEPEKEHDLMSNSSEDMKYMA.

Disordered regions lie at residues 16–59, 88–108, and 151–192; these read SHHH…SNTN, AAMT…WPGL, and ALTP…KYMA. Over residues 17-31 the composition is skewed to basic residues; sequence HHHHHHHAHHSRRQH. Residues 92-103 are compositionally biased toward polar residues; it reads PSPSNNDQNSPL. Basic and acidic residues predominate over residues 173–192; it reads EPEKEHDLMSNSSEDMKYMA.

This sequence belongs to the hunchback C2H2-type zinc-finger protein family.

It localises to the nucleus. Its function is as follows. Gap class segmentation protein that controls development of head structures. The sequence is that of Protein hunchback (hb) from Drosophila adiastola (Fruit fly).